A 1271-amino-acid polypeptide reads, in one-letter code: ATP-dependent helicase/nuclease subunit A (1271 aa).

The region spanning 3–476 is the UvrD-like helicase ATP-binding domain; that stretch reads TKWTEEQELA…IMLYKNFRSR (474 aa). 24 to 31 serves as a coordination point for ATP; the sequence is AAAGSGKT. The UvrD-like helicase C-terminal domain maps to 528 to 824; that stretch reads IENLKVAGDI…RIMSIHKSKG (297 aa).

Belongs to the helicase family. AddA subfamily. Heterodimer of AddA and AddB/RexB. The cofactor is Mg(2+).

It catalyses the reaction Couples ATP hydrolysis with the unwinding of duplex DNA by translocating in the 3'-5' direction.. It carries out the reaction ATP + H2O = ADP + phosphate + H(+). Its function is as follows. The heterodimer acts as both an ATP-dependent DNA helicase and an ATP-dependent, dual-direction single-stranded exonuclease. Recognizes the chi site generating a DNA molecule suitable for the initiation of homologous recombination. The AddA nuclease domain is required for chi fragment generation; this subunit has the helicase and 3' -&gt; 5' nuclease activities. In Clostridium perfringens (strain ATCC 13124 / DSM 756 / JCM 1290 / NCIMB 6125 / NCTC 8237 / Type A), this protein is ATP-dependent helicase/nuclease subunit A.